Reading from the N-terminus, the 365-residue chain is Succinyl-diaminopimelate desuccinylase (365 aa).

Residue H65 participates in Zn(2+) binding. The active site involves D67. D96 is a binding site for Zn(2+). Catalysis depends on E126, which acts as the Proton acceptor. Zn(2+) is bound by residues E127, E155, and H340.

Belongs to the peptidase M20A family. DapE subfamily. In terms of assembly, homodimer. It depends on Zn(2+) as a cofactor. Co(2+) serves as cofactor.

The catalysed reaction is N-succinyl-(2S,6S)-2,6-diaminopimelate + H2O = (2S,6S)-2,6-diaminopimelate + succinate. It functions in the pathway amino-acid biosynthesis; L-lysine biosynthesis via DAP pathway; LL-2,6-diaminopimelate from (S)-tetrahydrodipicolinate (succinylase route): step 3/3. In terms of biological role, catalyzes the hydrolysis of N-succinyl-L,L-diaminopimelic acid (SDAP), forming succinate and LL-2,6-diaminopimelate (DAP), an intermediate involved in the bacterial biosynthesis of lysine and meso-diaminopimelic acid, an essential component of bacterial cell walls. The sequence is that of Succinyl-diaminopimelate desuccinylase from Campylobacter jejuni subsp. jejuni serotype O:6 (strain 81116 / NCTC 11828).